Here is an 892-residue protein sequence, read N- to C-terminus: Translation initiation factor IF-2 (892 aa).

A disordered region spans residues 65 to 296; that stretch reads KTRSTLNIPS…KGKRKPSTLQ (232 aa). Polar residues predominate over residues 68–82; the sequence is STLNIPSTGGKSKSV. The segment covering 99–217 has biased composition (basic and acidic residues); that stretch reads EQAKAEEQAQ…KMAAENEGKW (119 aa). Over residues 224–237 the composition is skewed to polar residues; that stretch reads QTESADYHVTTSQH. A compositionally biased stretch (basic and acidic residues) spans 239 to 254; it reads RAAEDENDAKVEGDRR. Positions 255–269 are enriched in basic residues; it reads SRTRGGKATKQKKGN. Basic and acidic residues predominate over residues 270–283; that stretch reads KLSESKADREEARA. A tr-type G domain is found at 391 to 560; sequence HRAPVVTIMG…LLQAEVLELK (170 aa). The segment at 400–407 is G1; that stretch reads GHVDHGKT. 400–407 lines the GTP pocket; the sequence is GHVDHGKT. The segment at 425-429 is G2; the sequence is GITQH. The interval 446–449 is G3; the sequence is DTPG. GTP-binding positions include 446 to 450 and 500 to 503; these read DTPGH and NKID. A G4 region spans residues 500 to 503; that stretch reads NKID. Positions 536-538 are G5; the sequence is SAK.

It belongs to the TRAFAC class translation factor GTPase superfamily. Classic translation factor GTPase family. IF-2 subfamily.

It is found in the cytoplasm. Functionally, one of the essential components for the initiation of protein synthesis. Protects formylmethionyl-tRNA from spontaneous hydrolysis and promotes its binding to the 30S ribosomal subunits. Also involved in the hydrolysis of GTP during the formation of the 70S ribosomal complex. This is Translation initiation factor IF-2 from Yersinia pseudotuberculosis serotype O:1b (strain IP 31758).